The sequence spans 290 residues: tRNA(Ile)-lysidine synthase (290 aa).

12 to 17 serves as a coordination point for ATP; that stretch reads SGGSDS.

It belongs to the tRNA(Ile)-lysidine synthase family.

Its subcellular location is the cytoplasm. The enzyme catalyses cytidine(34) in tRNA(Ile2) + L-lysine + ATP = lysidine(34) in tRNA(Ile2) + AMP + diphosphate + H(+). Ligates lysine onto the cytidine present at position 34 of the AUA codon-specific tRNA(Ile) that contains the anticodon CAU, in an ATP-dependent manner. Cytidine is converted to lysidine, thus changing the amino acid specificity of the tRNA from methionine to isoleucine. This Mycoplasma genitalium (strain ATCC 33530 / DSM 19775 / NCTC 10195 / G37) (Mycoplasmoides genitalium) protein is tRNA(Ile)-lysidine synthase.